Consider the following 443-residue polypeptide: Trigger factor (443 aa).

A PPIase FKBP-type domain is found at 161 to 246; sequence GDKVVIDFQG…IKKIMEGKLP (86 aa).

The protein belongs to the FKBP-type PPIase family. Tig subfamily.

It localises to the cytoplasm. The catalysed reaction is [protein]-peptidylproline (omega=180) = [protein]-peptidylproline (omega=0). Its function is as follows. Involved in protein export. Acts as a chaperone by maintaining the newly synthesized protein in an open conformation. Functions as a peptidyl-prolyl cis-trans isomerase. In Legionella pneumophila (strain Lens), this protein is Trigger factor.